A 161-amino-acid chain; its full sequence is Cyclic pyranopterin monophosphate synthase (161 aa).

Substrate contacts are provided by residues 75 to 77 (LCH) and 113 to 114 (ME). Residue Asp128 is part of the active site.

The protein belongs to the MoaC family. In terms of assembly, homohexamer; trimer of dimers.

It carries out the reaction (8S)-3',8-cyclo-7,8-dihydroguanosine 5'-triphosphate = cyclic pyranopterin phosphate + diphosphate. It functions in the pathway cofactor biosynthesis; molybdopterin biosynthesis. In terms of biological role, catalyzes the conversion of (8S)-3',8-cyclo-7,8-dihydroguanosine 5'-triphosphate to cyclic pyranopterin monophosphate (cPMP). In Citrobacter koseri (strain ATCC BAA-895 / CDC 4225-83 / SGSC4696), this protein is Cyclic pyranopterin monophosphate synthase.